Reading from the N-terminus, the 185-residue chain is ATP synthase subunit b, cyanelle (185 aa).

The chain crosses the membrane as a helical span at residues 36–58; that stretch reads LINLLVIFFLLIYQGRPFFTALL.

It belongs to the ATPase B chain family. In terms of assembly, F-type ATPases have 2 components, F(1) - the catalytic core - and F(0) - the membrane proton channel. F(1) has five subunits: alpha(3), beta(3), gamma(1), delta(1), epsilon(1). F(0) has four main subunits: a(1), b(1), b'(1) and c(10-14). The alpha and beta chains form an alternating ring which encloses part of the gamma chain. F(1) is attached to F(0) by a central stalk formed by the gamma and epsilon chains, while a peripheral stalk is formed by the delta, b and b' chains.

It localises to the plastid. Its subcellular location is the cyanelle thylakoid membrane. Its function is as follows. F(1)F(0) ATP synthase produces ATP from ADP in the presence of a proton or sodium gradient. F-type ATPases consist of two structural domains, F(1) containing the extramembraneous catalytic core and F(0) containing the membrane proton channel, linked together by a central stalk and a peripheral stalk. During catalysis, ATP synthesis in the catalytic domain of F(1) is coupled via a rotary mechanism of the central stalk subunits to proton translocation. In terms of biological role, component of the F(0) channel, it forms part of the peripheral stalk, linking F(1) to F(0). In Cyanophora paradoxa, this protein is ATP synthase subunit b, cyanelle.